Consider the following 313-residue polypeptide: Protein TIC 22-like, chloroplastic (313 aa).

A chloroplast-targeting transit peptide spans 1–96 (MNSNIFPPSK…RISDDGGGAR (96 aa)).

This sequence belongs to the Tic22 family.

It localises to the plastid. Its subcellular location is the chloroplast intermembrane space. In terms of biological role, involved in protein precursor import into chloroplasts. The protein is Protein TIC 22-like, chloroplastic (TIC22L) of Arabidopsis thaliana (Mouse-ear cress).